Consider the following 183-residue polypeptide: ATP synthase subunit b, chloroplastic (183 aa).

A helical transmembrane segment spans residues Ile33–Leu51.

The protein belongs to the ATPase B chain family. F-type ATPases have 2 components, F(1) - the catalytic core - and F(0) - the membrane proton channel. F(1) has five subunits: alpha(3), beta(3), gamma(1), delta(1), epsilon(1). F(0) has four main subunits: a(1), b(1), b'(1) and c(10-14). The alpha and beta chains form an alternating ring which encloses part of the gamma chain. F(1) is attached to F(0) by a central stalk formed by the gamma and epsilon chains, while a peripheral stalk is formed by the delta, b and b' chains.

It is found in the plastid. The protein localises to the chloroplast thylakoid membrane. Functionally, f(1)F(0) ATP synthase produces ATP from ADP in the presence of a proton or sodium gradient. F-type ATPases consist of two structural domains, F(1) containing the extramembraneous catalytic core and F(0) containing the membrane proton channel, linked together by a central stalk and a peripheral stalk. During catalysis, ATP synthesis in the catalytic domain of F(1) is coupled via a rotary mechanism of the central stalk subunits to proton translocation. Its function is as follows. Component of the F(0) channel, it forms part of the peripheral stalk, linking F(1) to F(0). The chain is ATP synthase subunit b, chloroplastic from Oltmannsiellopsis viridis (Marine flagellate).